The following is a 103-amino-acid chain: Mitochondrial import inner membrane translocase subunit Tim10 B (103 aa).

A Twin CX3C motif motif is present at residues Cys-28–Cys-52. 2 disulfides stabilise this stretch: Cys-28/Cys-52 and Cys-32/Cys-48.

The protein belongs to the small Tim family. Component of the TIM22 complex, which core is composed of TIMM22, associated with TIMM10 (TIMM10A and/or TIMM10B), TIMM9, AGK and TIMM29. In terms of tissue distribution, ubiquitous, with highest expression in heart, kidney, liver and skeletal muscle.

The protein localises to the mitochondrion inner membrane. Component of the TIM22 complex, a complex that mediates the import and insertion of multi-pass transmembrane proteins into the mitochondrial inner membrane. The TIM22 complex forms a twin-pore translocase that uses the membrane potential as the external driving force. In the TIM22 complex, it may act as a docking point for the soluble 70 kDa complex that guides the target proteins in transit through the aqueous mitochondrial intermembrane space. The chain is Mitochondrial import inner membrane translocase subunit Tim10 B (TIMM10B) from Homo sapiens (Human).